Consider the following 561-residue polypeptide: Potassium-transporting ATPase potassium-binding subunit (561 aa).

The next 10 helical transmembrane spans lie at 4-24, 65-85, 133-153, 177-197, 253-273, 285-305, 380-400, 417-437, 484-504, and 528-548; these read IVMQ…PLGI, AVSV…VLML, IGLT…LFAV, LYIL…QGVV, FTNL…VVMF, AIMT…TISE, GLYG…LLVG, MVCL…AVAV, MVGA…ALYL, and FIGL…LPAL.

The protein belongs to the KdpA family. As to quaternary structure, the system is composed of three essential subunits: KdpA, KdpB and KdpC.

It is found in the cell membrane. In terms of biological role, part of the high-affinity ATP-driven potassium transport (or Kdp) system, which catalyzes the hydrolysis of ATP coupled with the electrogenic transport of potassium into the cytoplasm. This subunit binds the extracellular potassium ions and delivers the ions to the membrane domain of KdpB through an intramembrane tunnel. This is Potassium-transporting ATPase potassium-binding subunit from Listeria monocytogenes serotype 4b (strain CLIP80459).